Consider the following 939-residue polypeptide: AP-2 complex subunit alpha (939 aa).

The span at 623–633 shows a compositional bias: basic and acidic residues; it reads RVPENEIRESK. The tract at residues 623-660 is disordered; the sequence is RVPENEIRESKSPAPTSGPGSVLQNNVHVNNSHSKLNN. The span at 635 to 660 shows a compositional bias: polar residues; sequence PAPTSGPGSVLQNNVHVNNSHSKLNN.

The protein belongs to the adapter complexes large subunit family. As to quaternary structure, adaptor protein complex 2 (AP-2) is a heterotetramer composed of two large adaptins (alpha-type and beta-type subunits), a medium adaptin (mu-type subunit AP50) and a small adaptin (sigma-type subunit AP17).

The protein resides in the cell membrane. The protein localises to the membrane. It is found in the coated pit. Adaptins are components of the adapter complexes which link clathrin to receptors in coated vesicles. Clathrin-associated protein complexes are believed to interact with the cytoplasmic tails of membrane proteins, leading to their selection and concentration. Alpha adaptin is a subunit of the plasma membrane adapter. This chain is AP-2 complex subunit alpha, found in Drosophila pseudoobscura pseudoobscura (Fruit fly).